A 419-amino-acid polypeptide reads, in one-letter code: Light-independent protochlorophyllide reductase subunit N (419 aa).

[4Fe-4S] cluster contacts are provided by Cys-20, Cys-45, and Cys-102.

Belongs to the BchN/ChlN family. As to quaternary structure, protochlorophyllide reductase is composed of three subunits; BchL, BchN and BchB. Forms a heterotetramer of two BchB and two BchN subunits. The cofactor is [4Fe-4S] cluster.

It carries out the reaction chlorophyllide a + oxidized 2[4Fe-4S]-[ferredoxin] + 2 ADP + 2 phosphate = protochlorophyllide a + reduced 2[4Fe-4S]-[ferredoxin] + 2 ATP + 2 H2O. The protein operates within porphyrin-containing compound metabolism; bacteriochlorophyll biosynthesis (light-independent). In terms of biological role, component of the dark-operative protochlorophyllide reductase (DPOR) that uses Mg-ATP and reduced ferredoxin to reduce ring D of protochlorophyllide (Pchlide) to form chlorophyllide a (Chlide). This reaction is light-independent. The NB-protein (BchN-BchB) is the catalytic component of the complex. The chain is Light-independent protochlorophyllide reductase subunit N from Chlorobaculum tepidum (strain ATCC 49652 / DSM 12025 / NBRC 103806 / TLS) (Chlorobium tepidum).